An 810-amino-acid polypeptide reads, in one-letter code: Protein kinase C-binding protein NELL1 (810 aa).

The signal sequence occupies residues Met-1–Gly-21. N-linked (GlcNAc...) asparagine glycans are attached at residues Asn-40, Asn-53, Asn-83, Asn-224, Asn-294, and Asn-372. The region spanning Ala-57 to Cys-227 is the Laminin G-like domain. In terms of domain architecture, VWFC 1 spans Lys-271–Arg-332. 3 cysteine pairs are disulfide-bonded: Cys-395–Cys-407, Cys-401–Cys-416, and Cys-418–Cys-432. The Ca(2+) site is built by Asp-434, Ile-435, and Glu-437. One can recognise an EGF-like 1; calcium-binding domain in the interval Asp-434–Thr-475. Disulfide bonds link Cys-438/Cys-451, Cys-445/Cys-460, Cys-462/Cys-474, Cys-480/Cys-493, Cys-487/Cys-502, Cys-504/Cys-515, Cys-519/Cys-529, Cys-523/Cys-535, Cys-537/Cys-546, Cys-553/Cys-566, Cys-560/Cys-575, Cys-577/Cys-594, Cys-600/Cys-613, Cys-607/Cys-622, and Cys-624/Cys-630. Ca(2+) contacts are provided by Asn-453, Leu-454, and Leu-457. The 41-residue stretch at Glu-476–Lys-516 folds into the EGF-like 2; calcium-binding domain. Asn-511 carries an N-linked (GlcNAc...) asparagine glycan. Residues Ala-517–Glu-547 enclose the EGF-like 3 domain. In terms of domain architecture, EGF-like 4; calcium-binding spans Asp-549–Tyr-587. N-linked (GlcNAc...) asparagine glycosylation occurs at Asn-562. Residues Asp-596–Ser-631 enclose the EGF-like 5; calcium-binding domain. Asn-609 carries an N-linked (GlcNAc...) asparagine glycan. VWFC domains lie at Gly-632 to Asp-687 and Ser-692 to Val-750. An N-linked (GlcNAc...) asparagine glycan is attached at Asn-708.

Homotrimer. Binds to PKC beta-1. Interacts with ATRAID; the interaction promotes osteoblast cell differentiation and mineralization. Interacts with ROBO3.

The protein resides in the cytoplasm. Its subcellular location is the nucleus envelope. It is found in the secreted. Functionally, plays a role in the control of cell growth and differentiation. Promotes osteoblast cell differentiation and terminal mineralization. This Mus musculus (Mouse) protein is Protein kinase C-binding protein NELL1 (Nell1).